We begin with the raw amino-acid sequence, 118 residues long: Small ribosomal subunit protein uS13 (118 aa).

The segment at 94–118 (GLPVRGQRTKTNARTRKGPRKPIKK) is disordered.

This sequence belongs to the universal ribosomal protein uS13 family. Part of the 30S ribosomal subunit. Forms a loose heterodimer with protein S19. Forms two bridges to the 50S subunit in the 70S ribosome.

Its function is as follows. Located at the top of the head of the 30S subunit, it contacts several helices of the 16S rRNA. In the 70S ribosome it contacts the 23S rRNA (bridge B1a) and protein L5 of the 50S subunit (bridge B1b), connecting the 2 subunits; these bridges are implicated in subunit movement. Contacts the tRNAs in the A and P-sites. The polypeptide is Small ribosomal subunit protein uS13 (Pasteurella multocida (strain Pm70)).